A 98-amino-acid polypeptide reads, in one-letter code: Large ribosomal subunit protein uL23 (98 aa).

It belongs to the universal ribosomal protein uL23 family. Part of the 50S ribosomal subunit. Contacts protein L29, and trigger factor when it is bound to the ribosome.

Functionally, one of the early assembly proteins it binds 23S rRNA. One of the proteins that surrounds the polypeptide exit tunnel on the outside of the ribosome. Forms the main docking site for trigger factor binding to the ribosome. This chain is Large ribosomal subunit protein uL23, found in Halorhodospira halophila (strain DSM 244 / SL1) (Ectothiorhodospira halophila (strain DSM 244 / SL1)).